A 178-amino-acid chain; its full sequence is Extracellular fatty acid-binding protein (178 aa).

The N-terminal stretch at methionine 1–alanine 20 is a signal peptide. Alanine 21 is subject to Blocked amino end (Ala). Enterobactin is bound at residue threonine 43. Positions 72 and 104 each coordinate 1-tetradecanoyl-sn-glycerol 3-phosphate. The cysteines at positions 80 and 173 are disulfide-linked. Lysine 104, arginine 123, and arginine 134 together coordinate enterobactin. Position 134-136 (arginine 134–tyrosine 136) interacts with 1-tetradecanoyl-sn-glycerol 3-phosphate.

Belongs to the calycin superfamily. Lipocalin family. As to quaternary structure, monomer. Post-translationally, does not seem to be glycosylated. In terms of tissue distribution, expressed in egg white (at protein level). Expressed in the magnum of the oviduct (at protein level). Preferentially synthesized in nonproliferating cells.

It is found in the secreted. In terms of biological role, siderocalin-like lipocalin tightly binding a variety of bacterial ferric siderophores, also binds long-chain unsaturated fatty acids such as linoleic acid, oleic acid, arachidonic acid and, with a lower affinity, long chain saturated fatty acids such as steraic acid. May act as an antibacterial factor, through dual ligand specificity, both as a siderophore-sequestrating molecule and a lysophosphatidic acid (LPA) sensor. The chain is Extracellular fatty acid-binding protein (EXFABP) from Gallus gallus (Chicken).